A 103-amino-acid polypeptide reads, in one-letter code: Small ribosomal subunit protein uS10 (103 aa).

Belongs to the universal ribosomal protein uS10 family. As to quaternary structure, part of the 30S ribosomal subunit.

In terms of biological role, involved in the binding of tRNA to the ribosomes. This chain is Small ribosomal subunit protein uS10, found in Escherichia coli O127:H6 (strain E2348/69 / EPEC).